A 379-amino-acid chain; its full sequence is Cytochrome bd-I ubiquinol oxidase subunit 2 (379 aa).

Met1 carries the post-translational modification N-formylmethionine. Topologically, residues 1–8 (MIDYEVLR) are cytoplasmic. The helical transmembrane segment at 9–28 (FIWWLLVGVLLIGFAVTDGF) threads the bilayer. Topologically, residues 29 to 79 (DMGVGMLTRFLGRNDTERRIMINSIAPHWDGNQVWLITAGGALFAAWPMVY) are periplasmic. Residues 80 to 99 (AAAFSGFYVAMILVLASLFF) form a helical membrane-spanning segment. Over 100–122 (RPVGFDYRSKIEETRWRNMWDWG) the chain is Cytoplasmic. Residues 123–142 (IFIGSFVPPLVIGVAFGNLL) form a helical membrane-spanning segment. Residues 143 to 164 (QGVPFNVDEYLRLYYTGNFFQL) lie on the Periplasmic side of the membrane. Residues 165 to 184 (LNPFGLLAGVVSVGMIITQG) form a helical membrane-spanning segment. The Cytoplasmic portion of the chain corresponds to 185–205 (ATYLQMRTVGELHLRTRATAQ). A helical membrane pass occupies residues 206–225 (VAALVTLVCFALAGVWVMYG). The Periplasmic segment spans residues 226 to 262 (IDGYVVKSTMDHYAASNPLNKEVVREAGAWLVNFNNT). The helical transmembrane segment at 263-282 (PILWAIPALGVVLPLLTILT) threads the bilayer. Over 283-292 (ARMDKAAWAF) the chain is Cytoplasmic. Residues 293-312 (VFSSLTLACIILTAGIAMFP) traverse the membrane as a helical segment. Residues 313 to 336 (FVMPSSTMMNASLTMWDATSSQLT) are Periplasmic-facing. The chain crosses the membrane as a helical span at residues 337–356 (LNVMTWVAVVLVPIILLYTA). Residues 357–379 (WCYWKMFGRITKEDIERNTHSLY) lie on the Cytoplasmic side of the membrane.

Belongs to the cytochrome ubiquinol oxidase subunit 2 family. Heterodimer of subunits I and II. It depends on heme b as a cofactor. Heme d cis-diol is required as a cofactor.

The protein resides in the cell inner membrane. The catalysed reaction is 2 a ubiquinol + O2(in) + 4 H(+)(in) = 2 a ubiquinone + 2 H2O(in) + 4 H(+)(out). It functions in the pathway energy metabolism; oxidative phosphorylation. A terminal oxidase that produces a proton motive force by the vectorial transfer of protons across the inner membrane. It is the component of the aerobic respiratory chain of E.coli that predominates when cells are grown at low aeration. Generates a proton motive force using protons and electrons from opposite sides of the membrane to generate H(2)O, transferring 1 proton/electron. The chain is Cytochrome bd-I ubiquinol oxidase subunit 2 (cydB) from Escherichia coli O157:H7.